A 180-amino-acid chain; its full sequence is Large ribosomal subunit protein uL5 (180 aa).

Belongs to the universal ribosomal protein uL5 family. Part of the 50S ribosomal subunit; part of the 5S rRNA/L5/L18/L25 subcomplex. Contacts the 5S rRNA and the P site tRNA. Forms a bridge to the 30S subunit in the 70S ribosome.

This is one of the proteins that bind and probably mediate the attachment of the 5S RNA into the large ribosomal subunit, where it forms part of the central protuberance. In the 70S ribosome it contacts protein S13 of the 30S subunit (bridge B1b), connecting the 2 subunits; this bridge is implicated in subunit movement. Contacts the P site tRNA; the 5S rRNA and some of its associated proteins might help stabilize positioning of ribosome-bound tRNAs. The sequence is that of Large ribosomal subunit protein uL5 from Gloeothece citriformis (strain PCC 7424) (Cyanothece sp. (strain PCC 7424)).